The sequence spans 349 residues: Glycerol-3-phosphate dehydrogenase [NAD(+)], cytoplasmic (349 aa).

An NAD(+)-binding site is contributed by 10–15; it reads GSGNWG. Lysine 120 serves as a coordination point for substrate. Alanine 153 contributes to the NAD(+) binding site. Lysine 204 acts as the Proton acceptor in catalysis. Arginine 269 contributes to the NAD(+) binding site. 269-270 serves as a coordination point for substrate; sequence RN. N6-succinyllysine is present on lysine 289. Residues lysine 296 and glutamine 298 each coordinate NAD(+). Tyrosine 326 carries the post-translational modification Phosphotyrosine.

This sequence belongs to the NAD-dependent glycerol-3-phosphate dehydrogenase family. As to quaternary structure, homodimer.

The protein resides in the cytoplasm. It carries out the reaction sn-glycerol 3-phosphate + NAD(+) = dihydroxyacetone phosphate + NADH + H(+). Functionally, has glycerol-3-phosphate dehydrogenase activity. This Bos taurus (Bovine) protein is Glycerol-3-phosphate dehydrogenase [NAD(+)], cytoplasmic (GPD1).